A 461-amino-acid chain; its full sequence is RCC1-like G exchanging factor-like protein (461 aa).

Over residues 1–10 (MLAAARALRG) the composition is skewed to low complexity. The transit peptide at 1–34 (MLAAARALRGPRPRWPTPAREHWTPAGRSRSRRE) directs the protein to the mitochondrion. A disordered region spans residues 1-35 (MLAAARALRGPRPRWPTPAREHWTPAGRSRSRREA). RCC1 repeat units follow at residues 55 to 121 (ADRV…LSSK), 125 to 188 (VTKV…VLTD), 190 to 244 (EGVF…FLTD), 245 to 297 (KGEV…ALSA), 298 to 350 (DGGV…VLNA), 352 to 408 (GHVF…ALTN), and 409 to 458 (KGEL…TLAK).

In terms of assembly, forms a regulatory protein-RNA complex, consisting of RCC1L, NGRN, RPUSD3, RPUSD4, TRUB2, FASTKD2 and 16S mt-rRNA. Interacts with 16S mt-rRNA; this interaction is direct. Interacts with OPA1; this interaction is direct. As to expression, at E8.5, broadly expressed in yolk sac placenta, decidua, and embryo, with highest levels found in the trophoblast giant cells (TGCs) and ectoplacental cone (at protein level).

It is found in the mitochondrion inner membrane. Guanine nucleotide exchange factor (GEF) for mitochondrial dynamin-related GTPase OPA1. Activates OPA1, by exchanging bound GDP for free GTP, and drives OPA1 and MFN1-dependent mitochondrial fusion. Plays an essential role in mitochondrial ribosome biogenesis. As a component of a functional protein-RNA module, consisting of RCC1L, NGRN, RPUSD3, RPUSD4, TRUB2, FASTKD2 and 16S mitochondrial ribosomal RNA (16S mt-rRNA), controls 16S mt-rRNA abundance and is required for intra-mitochondrial translation of core subunits of the oxidative phosphorylation system. This chain is RCC1-like G exchanging factor-like protein, found in Mus musculus (Mouse).